Consider the following 29-residue polypeptide: Small toxic protein TisB (29 aa).

Residues 6 to 28 traverse the membrane as a helical segment; the sequence is IAILILKLIVAALQLLDAVLKYL.

Its subcellular location is the cell inner membrane. Its function is as follows. Toxic component of a type I toxin-antitoxin (TA) system. Overexpression causes cessation of growth, induces stress-response, a number of membrane protein genes, and leads to cell death. Inhibits ATP synthesis, ATP levels drop drastically quickly after induction. Part of the programmed response to DNA damage; damage leads to increased accumulation of the protein which slows or stops bacterial growth, probably allowing DNA repair before cells continue to grow. The polypeptide is Small toxic protein TisB (tisB) (Escherichia coli (strain K12)).